Here is a 1007-residue protein sequence, read N- to C-terminus: A disintegrin and metalloproteinase with thrombospondin motifs 1 (1007 aa).

Positions 1-20 (MPCCLWAALSLLLAVVGAGA) are cleaved as a signal peptide. Residues Asn130 and Asn228 are each glycosylated (N-linked (GlcNAc...) asparagine). The Peptidase M12B domain maps to 184-370 (LWLELAIVAD…WSSCSKEQFH (187 aa)). His322 provides a ligand contact to Zn(2+). The Metal-binding motif lies at 322–333 (HELAHLLGLTHD). The active site involves Glu323. Residues His326 and His332 each coordinate Zn(2+). Disulfide bonds link Cys338–Cys364, Cys494–Cys530, Cys498–Cys536, and Cys509–Cys520. One can recognise a TSP type-1 1 domain in the interval 482-537 (TPEWGDWEEWSACNADCGYGLRTRTRKCKYRGFVSESACEGAGSQVATCWAGSSCA). Residues Asn561, Asn610, Asn626, Asn737, Asn777, and Asn865 are each glycosylated (N-linked (GlcNAc...) asparagine). TSP type-1 domains are found at residues 833-899 (CEFV…NRIP) and 900-952 (CPVY…RRCP). Cystine bridges form between Cys912–Cys946, Cys916–Cys951, and Cys927–Cys935.

The cofactor is Zn(2+).

Its subcellular location is the secreted. It is found in the extracellular space. The protein resides in the extracellular matrix. In terms of biological role, involved in larval molting and metamorphosis. May degrade extracellular matrix (ECM) and basement membrane (BM) during the development of organs to allow degeneration and remodeling of tissues. The chain is A disintegrin and metalloproteinase with thrombospondin motifs 1 from Bombyx mori (Silk moth).